The chain runs to 186 residues: Small ribosomal subunit protein uS5 (186 aa).

An S5 DRBM domain is found at 18-81; it reads FVDKLVHINR…EAAKRAMIRV (64 aa).

It belongs to the universal ribosomal protein uS5 family. In terms of assembly, part of the 30S ribosomal subunit. Contacts proteins S4 and S8.

Functionally, with S4 and S12 plays an important role in translational accuracy. Its function is as follows. Located at the back of the 30S subunit body where it stabilizes the conformation of the head with respect to the body. This Parvibaculum lavamentivorans (strain DS-1 / DSM 13023 / NCIMB 13966) protein is Small ribosomal subunit protein uS5.